The primary structure comprises 590 residues: Transcription factor bHLH13 (590 aa).

Disordered regions lie at residues Leu-274 to Phe-296 and Ala-385 to Arg-439. The segment covering Gln-281 to His-293 has biased composition (low complexity). Residues Arg-416 to Ala-425 show a composition bias toward basic residues. The bHLH domain occupies Ala-429–Leu-478.

Homodimer.

Its subcellular location is the nucleus. This is Transcription factor bHLH13 (BHLH13) from Arabidopsis thaliana (Mouse-ear cress).